A 1430-amino-acid polypeptide reads, in one-letter code: Bromodomain-containing protein homolog (1430 aa).

The C2H2-type zinc finger occupies 23–49 (FACPVRGCDRSYKTIMGLQYHLMKYDH). The interval 51-111 (NPQPLTPVLT…AGGGSASGVS (61 aa)) is disordered. The span at 62 to 81 (SRKKARSRSGGHHSTPRPHK) shows a compositional bias: basic residues. The PHD-type 1 zinc finger occupies 283–333 (DAVCCICLDGECQNTNVILFCDMCNLAVHQDCYGVPYIPEGQWLCRRCLQS). Zn(2+) is bound by residues Cys286, Cys289, Cys303, Cys306, His311, Cys314, Cys327, and Cys330. The C2HC pre-PHD-type zinc finger occupies 337-370 (PVNCVLCPNAGGAFKQTDHGQWAHVVCALWIPEV). A PHD-type 2 zinc finger spans residues 394-457 (LTCYVCKEKG…QKFAYCHAHT (64 aa)). Positions 611-715 (LQLNPLEAAL…DQAAPLFVQV (105 aa)) constitute a Bromo domain. The span at 796–805 (KARFAARHSS) shows a compositional bias: basic residues. Disordered regions lie at residues 796-887 (KARF…SSPV), 901-942 (AQAA…TTAA), 1012-1054 (ANLP…QALP), and 1076-1301 (QRDV…GQKP). A compositionally biased stretch (acidic residues) spans 842-857 (HDDDDEEEDSDEDSMG). Polar residues predominate over residues 865–887 (LLNSTQTPPCSPIKSLNNSSSPV). 3 stretches are compositionally biased toward low complexity: residues 922–942 (NSQSSNTQSTSGSSSSVTTAA), 1034–1043 (SSSMSPKKSP), and 1085–1107 (APSQSSSPCSSCSDFSMSGSCSD). Residues 1108-1120 (FDSDEASEGDADG) show a composition bias toward acidic residues. A compositionally biased stretch (basic and acidic residues) spans 1121-1137 (DPDRDGGRSRSEERDST). Polar residues-rich tracts occupy residues 1151–1165 (ASLNNVQGNNGNMAI) and 1265–1278 (NTTAAGSAPLTNNN). Residues 1281 to 1293 (KHSEDSASSERHN) are compositionally biased toward basic and acidic residues. Residues 1305-1378 (PLQLVWAKCR…TWQWLPANKL (74 aa)) form the PWWP domain.

Component of the Enok complex composed of at least Br140, enok, Eaf6 and Ing5. As part of the Enok complex, interacts with elg1 and the Elg1 RFC-like complex.

It is found in the nucleus. Functionally, scaffold subunit of the histone acetyltransferase (HAT) Enok complex which has histone H3 acetyltransferase activity. As part of the Enok complex, associates with the Elg1 RFC-like complex and down-regulates its PCNA-unloading function to promote the G1/S transition. May also play a role in maintaining the protein levels and stability of enok. The polypeptide is Bromodomain-containing protein homolog (Drosophila melanogaster (Fruit fly)).